Here is a 365-residue protein sequence, read N- to C-terminus: S-type anion channel SLAH4 (365 aa).

The Cytoplasmic portion of the chain corresponds to 1–25; that stretch reads MEIPSQEIHIMIDNTISRRKERKTN. The chain crosses the membrane as a helical span at residues 26-46; the sequence is LADAEPIVLMSVLSSLHAGYF. At 47–73 the chain is on the extracellular side; sequence RISLSLCSQALLWKIMVHLHSELPSMA. Residues 74-94 form a helical membrane-spanning segment; sequence YYLLWYLALATQVSLCFLYAF. Topologically, residues 95 to 106 are cytoplasmic; the sequence is KCIFLFDMVKEE. The chain crosses the membrane as a helical span at residues 107-127; sequence FSHYIGVNYLYAPSISCLLLL. Residues 128–131 lie on the Extracellular side of the membrane; sequence QSAP. The chain crosses the membrane as a helical span at residues 132 to 152; it reads MIEPHSVLYQTLFWIFAVPVL. Topologically, residues 153–168 are cytoplasmic; the sequence is TLDTKLYGQWFTTEKR. A helical transmembrane segment spans residues 169 to 189; sequence FLSIMANPASQVSVIANLVAA. At 190–199 the chain is on the extracellular side; the sequence is RGAAEMGWKE. A helical transmembrane segment spans residues 200 to 220; sequence CALCLFSLGMVHYLVIFVTLY. Over 221-235 the chain is Cytoplasmic; sequence QRLPGGNNFPTTLRP. A helical membrane pass occupies residues 236–256; sequence VFFLFFAAPATASLAWNSICG. Residue N257 is a topological domain, extracellular. A helical membrane pass occupies residues 258-278; sequence FDTIAKMLFFLSLFIFISLVC. Residues 279–291 lie on the Cytoplasmic side of the membrane; sequence RPNLLKKSIKRFN. Residues 292 to 312 form a helical membrane-spanning segment; the sequence is VAWWAYSFPITFLALNSVQYA. At 313–321 the chain is on the extracellular side; sequence QEVKDHVAS. The chain crosses the membrane as a helical span at residues 322–342; it reads VLMFIFSSMSVLIFISVMLLT. Topologically, residues 343 to 365 are cytoplasmic; the sequence is AANSKRLLRRDHVLWSSTGPKDK.

This sequence belongs to the SLAC1 S-type anion channel family. As to quaternary structure, homotrimer.

The protein localises to the cell membrane. Functionally, slow, weak voltage-dependent S-type anion efflux channel involved in maintenance of anion homeostasis. This Arabidopsis thaliana (Mouse-ear cress) protein is S-type anion channel SLAH4 (SLAH4).